The primary structure comprises 130 residues: uncharacterized protein (130 aa).

3 helical membrane-spanning segments follow: residues 34-54, 73-93, and 107-127; these read AILI…FAFF, LLLT…GWLA, and FGTG…IVWI.

It localises to the cell membrane. This is an uncharacterized protein from Mycoplasma pneumoniae (strain ATCC 29342 / M129 / Subtype 1) (Mycoplasmoides pneumoniae).